Consider the following 162-residue polypeptide: Glycine cleavage system H protein, mitochondrial (162 aa).

Residues 1–31 (MALRMWASSTANALRLSSATRPHFSPLSRCF) constitute a mitochondrion transit peptide. Positions 53 to 135 (VATIGITDHA…YEDGWMIKVK (83 aa)) constitute a Lipoyl-binding domain. Lysine 94 carries the N6-lipoyllysine modification.

It belongs to the GcvH family. As to quaternary structure, the glycine cleavage system is composed of four proteins: P, T, L and H. It depends on (R)-lipoate as a cofactor.

The protein localises to the mitochondrion. Functionally, the glycine cleavage system catalyzes the degradation of glycine. The H protein shuttles the methylamine group of glycine from the P protein to the T protein. This chain is Glycine cleavage system H protein, mitochondrial (GDCSH), found in Flaveria anomala (Yellowtops).